Here is a 459-residue protein sequence, read N- to C-terminus: MRPALALCLLCPAFWPRPGNGEHPTADRAACSASGACYSLHHATFKRRAAEEACSLRGGTLSTVHSGSEFQAVLLLLRAGPGPGGGSKDLLFWVALERSISQCTQEKEPLRGFSWLHPDSEDSEDSPLPWVEEPQRSCTVRKCAALQATRGVEPAGWKEMRCHLRTDGYLCKYQFEVLCPAPRPGAASNLSFQAPFRLSSSALDFSPPGTEVSAMCPGDLSVSSTCIQEETSAHWDGLFPGTVLCPCSGRYLLAGKCVELPDCLDHLGDFTCECAVGFELGKDGRSCETKVEEQLTLEGTKLPTRNVTATPAGAVTNRTWPGQVYDKPGEMPQVTEILQWGTQSTLPTIQKTPQTKPKVTGTPSGSVVLNYTSSPPVSLTFDTSSTVVFILVSIAVIVLVVLTITVLGLFKLCFHKSRSSRTGKGALDSPGVECDAEATSLHHSSTQCTDIGVKSGTVA.

An N-terminal signal peptide occupies residues 1–21 (MRPALALCLLCPAFWPRPGNG). Residues 22 to 386 (EHPTADRAAC…VSLTFDTSST (365 aa)) lie on the Extracellular side of the membrane. The 141-residue stretch at 33–173 (ASGACYSLHH…LRTDGYLCKY (141 aa)) folds into the C-type lectin domain. Cys143 and Cys162 form a disulfide bridge. The N-linked (GlcNAc...) asparagine glycan is linked to Asn189. Residues 246 to 288 (PCSGRYLLAGKCVELPDCLDHLGDFTCECAVGFELGKDGRSCE) enclose the EGF-like domain. Asn306, Asn317, and Asn370 each carry an N-linked (GlcNAc...) asparagine glycan. The chain crosses the membrane as a helical span at residues 387–407 (VVFILVSIAVIVLVVLTITVL). Topologically, residues 408 to 459 (GLFKLCFHKSRSSRTGKGALDSPGVECDAEATSLHHSSTQCTDIGVKSGTVA) are cytoplasmic. A Phosphoserine modification is found at Ser440.

The protein localises to the membrane. The protein is C-type lectin domain family 14 member A (Clec14a) of Mus musculus (Mouse).